A 328-amino-acid chain; its full sequence is Porphobilinogen deaminase (328 aa).

Position 250 is an S-(dipyrrolylmethanemethyl)cysteine (Cys250).

It belongs to the HMBS family. In terms of assembly, monomer. Requires dipyrromethane as cofactor.

The catalysed reaction is 4 porphobilinogen + H2O = hydroxymethylbilane + 4 NH4(+). It functions in the pathway porphyrin-containing compound metabolism; protoporphyrin-IX biosynthesis; coproporphyrinogen-III from 5-aminolevulinate: step 2/4. Tetrapolymerization of the monopyrrole PBG into the hydroxymethylbilane pre-uroporphyrinogen in several discrete steps. The chain is Porphobilinogen deaminase from Burkholderia ambifaria (strain ATCC BAA-244 / DSM 16087 / CCUG 44356 / LMG 19182 / AMMD) (Burkholderia cepacia (strain AMMD)).